Consider the following 1234-residue polypeptide: Transcription-repair-coupling factor (1234 aa).

In terms of domain architecture, Helicase ATP-binding spans Asp663–Ile824. Gly676 to Thr683 is an ATP binding site. Positions Asp777–Gln780 match the DEEQ box motif. A Helicase C-terminal domain is found at Asp842 to Glu999. The tract at residues Arg1207–Pro1234 is disordered. The span at Glu1220–Pro1234 shows a compositional bias: basic and acidic residues.

This sequence in the N-terminal section; belongs to the UvrB family. The protein in the C-terminal section; belongs to the helicase family. RecG subfamily.

Its subcellular location is the cytoplasm. Functionally, couples transcription and DNA repair by recognizing RNA polymerase (RNAP) stalled at DNA lesions. Mediates ATP-dependent release of RNAP and its truncated transcript from the DNA, and recruitment of nucleotide excision repair machinery to the damaged site. The protein is Transcription-repair-coupling factor of Mycobacterium bovis (strain ATCC BAA-935 / AF2122/97).